The following is a 276-amino-acid chain: MLDILSAIILGAVQGISEFLPISSSGHLVLVPALLGIETGLAFDTILHIGTLVAIFTFFWKDIINLIKGFILSIIDLTEGVDIFKRELHRVPEKRFAWLIIVGTIPTGIMGILLKDAIETIFRGTLFVGIFLLVTAAVLYYSERHSSGQITQKDMSFKQALIVGICQGLAVFPGISRSGSTIASGLCLGLNREYAARYSFLLSIPAVIGAGLIQIKDIATLDASASVLLAGFISSVIFGYLSIKLLMKMIKGWSLDIFAYYCTIIGIITIILSVVL.

Helical transmembrane passes span 40-60 (GLAF…TFFW), 98-118 (WLII…KDAI), 121-141 (IFRG…VLYY), 155-175 (MSFK…FPGI), 200-220 (FLLS…DIAT), 227-247 (VLLA…KLLM), and 255-275 (LDIF…LSVV).

The protein belongs to the UppP family.

The protein localises to the cell membrane. The enzyme catalyses di-trans,octa-cis-undecaprenyl diphosphate + H2O = di-trans,octa-cis-undecaprenyl phosphate + phosphate + H(+). Functionally, catalyzes the dephosphorylation of undecaprenyl diphosphate (UPP). In Methanosphaera stadtmanae (strain ATCC 43021 / DSM 3091 / JCM 11832 / MCB-3), this protein is Undecaprenyl-diphosphatase.